Reading from the N-terminus, the 447-residue chain is NADH-ubiquinone oxidoreductase chain 4 (447 aa).

13 consecutive transmembrane segments (helical) span residues 28 to 48, 56 to 76, 89 to 109, 110 to 130, 141 to 161, 183 to 203, 213 to 233, 246 to 266, 273 to 293, 298 to 318, 331 to 351, 374 to 394, and 409 to 431; these read IFLLTFMFMINLSSLNYFNYI, MVSYGLILLSFWICGLMLMAS, FVFMILFLLFMLVLTFSSMSV, FMFYLFFEASLIPTLFLILGW, VYLLFYTLLASLPLLIGIFYI, LLYLSLVFAFLVKMPMFLVHL, PVSGSMILAGILLKLGGYGLL, YNYWWISISLVGGVLISLVCL, ALIAYSSVAHMGIVLSGLLTM, LTGSYALMIAHGLCSSGLFCL, LLINKGLLNFMPTLSLWWFLL, IVSWSWITMIMLSFLSFFSAA, and YSGVYFFSVGTTREFLLLMLHWL.

The protein belongs to the complex I subunit 4 family.

The protein localises to the mitochondrion membrane. It catalyses the reaction a ubiquinone + NADH + 5 H(+)(in) = a ubiquinol + NAD(+) + 4 H(+)(out). In terms of biological role, core subunit of the mitochondrial membrane respiratory chain NADH dehydrogenase (Complex I) that is believed to belong to the minimal assembly required for catalysis. Complex I functions in the transfer of electrons from NADH to the respiratory chain. The immediate electron acceptor for the enzyme is believed to be ubiquinone. In Anopheles gambiae (African malaria mosquito), this protein is NADH-ubiquinone oxidoreductase chain 4 (mt:ND4).